We begin with the raw amino-acid sequence, 273 residues long: 4-hydroxy-tetrahydrodipicolinate reductase (273 aa).

Residue 12-17 participates in NAD(+) binding; sequence GANGRM. Arg39 is a binding site for NADP(+). NAD(+)-binding positions include 102–104 and 126–129; these read GTT and AANF. His159 functions as the Proton donor/acceptor in the catalytic mechanism. His160 serves as a coordination point for (S)-2,3,4,5-tetrahydrodipicolinate. Residue Lys163 is the Proton donor of the active site. Residue 169–170 participates in (S)-2,3,4,5-tetrahydrodipicolinate binding; it reads GT.

The protein belongs to the DapB family. Homotetramer.

The protein resides in the cytoplasm. It carries out the reaction (S)-2,3,4,5-tetrahydrodipicolinate + NAD(+) + H2O = (2S,4S)-4-hydroxy-2,3,4,5-tetrahydrodipicolinate + NADH + H(+). The enzyme catalyses (S)-2,3,4,5-tetrahydrodipicolinate + NADP(+) + H2O = (2S,4S)-4-hydroxy-2,3,4,5-tetrahydrodipicolinate + NADPH + H(+). It functions in the pathway amino-acid biosynthesis; L-lysine biosynthesis via DAP pathway; (S)-tetrahydrodipicolinate from L-aspartate: step 4/4. Functionally, catalyzes the conversion of 4-hydroxy-tetrahydrodipicolinate (HTPA) to tetrahydrodipicolinate. The protein is 4-hydroxy-tetrahydrodipicolinate reductase of Cronobacter sakazakii (strain ATCC BAA-894) (Enterobacter sakazakii).